Here is a 590-residue protein sequence, read N- to C-terminus: Multidrug resistance-like ATP-binding protein MdlA (590 aa).

One can recognise an ABC transmembrane type-1 domain in the interval Tyr18–Arg303. 6 consecutive transmembrane segments (helical) span residues Ala23 to Val43, Thr53 to Leu73, Gly134 to Thr154, Gln155 to Ile175, Ile248 to Val268, and Phe280 to Ile300. The ABC transporter domain occupies Val337–Tyr570. Gly369 to Ser376 is a binding site for ATP.

Belongs to the ABC transporter superfamily. Drug exporter-2 (TC 3.A.1.117) family.

The protein localises to the cell inner membrane. The enzyme catalyses ATP + H2O + xenobioticSide 1 = ADP + phosphate + xenobioticSide 2.. The polypeptide is Multidrug resistance-like ATP-binding protein MdlA (mdlA) (Escherichia coli (strain K12)).